Consider the following 161-residue polypeptide: Lipoprotein signal peptidase (161 aa).

The next 3 helical transmembrane spans lie at isoleucine 6–valine 26, glycine 67–lysine 87, and valine 90–leucine 110. Active-site residues include aspartate 121 and aspartate 139. A helical membrane pass occupies residues alanine 134–isoleucine 154.

The protein belongs to the peptidase A8 family.

The protein localises to the cell inner membrane. It catalyses the reaction Release of signal peptides from bacterial membrane prolipoproteins. Hydrolyzes -Xaa-Yaa-Zaa-|-(S,diacylglyceryl)Cys-, in which Xaa is hydrophobic (preferably Leu), and Yaa (Ala or Ser) and Zaa (Gly or Ala) have small, neutral side chains.. It participates in protein modification; lipoprotein biosynthesis (signal peptide cleavage). Functionally, this protein specifically catalyzes the removal of signal peptides from prolipoproteins. The polypeptide is Lipoprotein signal peptidase (Syntrophus aciditrophicus (strain SB)).